Consider the following 80-residue polypeptide: QAPNYSTASYNVVAVKINLFLSTNNKLYIHDTGVRAVYLAGMKVYLAANPTASSQTFNSDTLVYILDTGINEPNYYINLY.

This sequence belongs to the peptidase S8 family. Monomer. In terms of tissue distribution, body cavity.

The protein localises to the secreted. Its activity is regulated as follows. Inhibited by the serine protease inhibitors DFP, PMSF and TLCK. Not inhibited by the serine protease inhibitors aprotinin, elastinal, SBTI and benzamidine, the cysteine protease inhibitors iodoacetate and E64, or the metalloprotease inhibitors EDTA and EGTA. In terms of biological role, serine protease. Hydrolyzes the alpha chains of fibrin and fibrinogen completely, has lower activity on the beta and gamma chains of fibrin and fibrinogen. This chain is N-V protease, found in Alitta virens (Sandworm).